Reading from the N-terminus, the 271-residue chain is Phosphonates import ATP-binding protein PhnC 2 (271 aa).

An ABC transporter domain is found at 2 to 246; that stretch reads LTVDNLEKTY…ARDEIYRGGE (245 aa). 35–42 contacts ATP; that stretch reads GPSGAGKS. Basic and acidic residues predominate over residues 243-254; it reads RGGESIADREEP. Residues 243-271 form a disordered region; the sequence is RGGESIADREEPSAGNSTDADDVIAERGD.

It belongs to the ABC transporter superfamily. Phosphonates importer (TC 3.A.1.9.1) family. The complex is composed of two ATP-binding proteins (PhnC), two transmembrane proteins (PhnE) and a solute-binding protein (PhnD).

Its subcellular location is the cell membrane. The catalysed reaction is phosphonate(out) + ATP + H2O = phosphonate(in) + ADP + phosphate + H(+). In terms of biological role, part of the ABC transporter complex PhnCDE involved in phosphonates import. Responsible for energy coupling to the transport system. This chain is Phosphonates import ATP-binding protein PhnC 2, found in Haloarcula marismortui (strain ATCC 43049 / DSM 3752 / JCM 8966 / VKM B-1809) (Halobacterium marismortui).